The chain runs to 317 residues: Small ribosomal subunit protein RACK1 (317 aa).

WD repeat units follow at residues 15-55, 64-103, 106-146, 148-188, 191-230, 232-272, and 281-317; these read GHNG…DNQY, GHSH…TTQR, GHKG…ATLT, HNDW…VNAD, GHTG…TLYT, EAKA…DELK, and AKDP…TPSA.

Belongs to the WD repeat G protein beta family. Ribosomal protein RACK1 subfamily. Component of the small ribosomal subunit. Mature ribosomes consist of a small (40S) and a large (60S) subunit. The 40S subunit contains about 32 different proteins and 1 molecule of RNA (18S). The 60S subunit contains 45 different proteins and 3 molecules of RNA (25S, 5.8S and 5S).

The protein localises to the cytoplasm. In terms of biological role, component of the ribosome, a large ribonucleoprotein complex responsible for the synthesis of proteins in the cell. The small ribosomal subunit (SSU) binds messenger RNAs (mRNAs) and translates the encoded message by selecting cognate aminoacyl-transfer RNA (tRNA) molecules. The large subunit (LSU) contains the ribosomal catalytic site termed the peptidyl transferase center (PTC), which catalyzes the formation of peptide bonds, thereby polymerizing the amino acids delivered by tRNAs into a polypeptide chain. The nascent polypeptides leave the ribosome through a tunnel in the LSU and interact with protein factors that function in enzymatic processing, targeting, and the membrane insertion of nascent chains at the exit of the ribosomal tunnel. Located at the head of the 40S ribosomal subunit in the vicinity of the mRNA exit channel, it serves as a scaffold protein that can recruit other proteins to the ribosome. Involved in the negative regulation of translation of a specific subset of proteins. Plays a role in morphogenesis and pathogenesis. This Candida albicans (strain SC5314 / ATCC MYA-2876) (Yeast) protein is Small ribosomal subunit protein RACK1.